The chain runs to 551 residues: Glucans biosynthesis protein D (551 aa).

Positions 1–32 form a signal peptide, tat-type signal; the sequence is MNRRRFIKGSMAMAAVCGSSGIASLFSQAAFA.

Belongs to the OpgD/OpgG family. In terms of processing, predicted to be exported by the Tat system. The position of the signal peptide cleavage has not been experimentally proven.

It is found in the periplasm. Its pathway is glycan metabolism; osmoregulated periplasmic glucan (OPG) biosynthesis. In terms of biological role, probably involved in the control of the structural glucose backbone of osmoregulated periplasmic glucans (OPGs). This is Glucans biosynthesis protein D from Salmonella enteritidis PT4 (strain P125109).